The following is a 95-amino-acid chain: Glutamyl-tRNA(Gln) amidotransferase subunit C (95 aa).

It belongs to the GatC family. In terms of assembly, heterotrimer of A, B and C subunits.

It catalyses the reaction L-glutamyl-tRNA(Gln) + L-glutamine + ATP + H2O = L-glutaminyl-tRNA(Gln) + L-glutamate + ADP + phosphate + H(+). The catalysed reaction is L-aspartyl-tRNA(Asn) + L-glutamine + ATP + H2O = L-asparaginyl-tRNA(Asn) + L-glutamate + ADP + phosphate + 2 H(+). Functionally, allows the formation of correctly charged Asn-tRNA(Asn) or Gln-tRNA(Gln) through the transamidation of misacylated Asp-tRNA(Asn) or Glu-tRNA(Gln) in organisms which lack either or both of asparaginyl-tRNA or glutaminyl-tRNA synthetases. The reaction takes place in the presence of glutamine and ATP through an activated phospho-Asp-tRNA(Asn) or phospho-Glu-tRNA(Gln). This is Glutamyl-tRNA(Gln) amidotransferase subunit C from Caulobacter vibrioides (strain ATCC 19089 / CIP 103742 / CB 15) (Caulobacter crescentus).